Here is an 840-residue protein sequence, read N- to C-terminus: Recyclin-1 (840 aa).

The region spanning 1–48 (MDDLLKVPEIVTNIASYLSTVDYLSFQQVNKRVYAIINGKNDSKYWSL) is the F-box domain. At Ser409 the chain carries Phosphoserine.

In terms of assembly, interacts with SKP1.

It localises to the cytoplasm. The protein localises to the bud neck. It is found in the cell tip. Functionally, involved in recycling plasma membrane proteins internalized by endocytosis. Required for recycling of the v-SNARE SNC1. In Saccharomyces cerevisiae (strain ATCC 204508 / S288c) (Baker's yeast), this protein is Recyclin-1 (RCY1).